Consider the following 214-residue polypeptide: Adenylate kinase (214 aa).

Position 10-15 (Gly10–Thr15) interacts with ATP. The interval Ser30 to Val59 is NMP. Residues Thr31, Arg36, Gln57–Val59, Gly85–Arg88, and Gln92 each bind AMP. The segment at Gly126 to Asp163 is LID. ATP is bound at residue Arg127. Positions 130 and 133 each coordinate Zn(2+). An ATP-binding site is contributed by Thr136–Phe137. The Zn(2+) site is built by Cys150 and Cys153. The AMP site is built by Arg160 and Arg171. Gln199 contacts ATP.

This sequence belongs to the adenylate kinase family. Monomer.

The protein resides in the cytoplasm. It catalyses the reaction AMP + ATP = 2 ADP. It participates in purine metabolism; AMP biosynthesis via salvage pathway; AMP from ADP: step 1/1. Catalyzes the reversible transfer of the terminal phosphate group between ATP and AMP. Plays an important role in cellular energy homeostasis and in adenine nucleotide metabolism. The sequence is that of Adenylate kinase from Desulforudis audaxviator (strain MP104C).